The chain runs to 625 residues: Interleukin-1 receptor-associated kinase-like 2 (625 aa).

The Death domain occupies 13–94; the sequence is LDDPCRNMDA…RAAQIILNWK (82 aa). The segment at 111-181 is disordered; the sequence is KPEKPLAASV…SSDSKDFSTS (71 aa). Serine 144 carries the phosphoserine modification. A compositionally biased stretch (polar residues) spans 169–181; that stretch reads LPTSSDSKDFSTS. Residues 210 to 503 form the Protein kinase domain; the sequence is FNQNHKISQG…GSVAAVEEWL (294 aa). Residues 216–224, lysine 237, and 337–340 contribute to the ATP site; these read ISQGTFADV and KSSN. The disordered stretch occupies residues 513-539; it reads SGLSEGTGSSSNTPEETDDVDNSSLDA. Polar residues predominate over residues 516–526; it reads SEGTGSSSNTP.

It belongs to the protein kinase superfamily. TKL Ser/Thr protein kinase family. Pelle subfamily. In terms of assembly, interacts with MYD88. IL-1 stimulation leads to the formation of a signaling complex which dissociates from the IL-1 receptor following the binding of PELI1.

Its function is as follows. Binds to the IL-1 type I receptor following IL-1 engagement, triggering intracellular signaling cascades leading to transcriptional up-regulation and mRNA stabilization. This is Interleukin-1 receptor-associated kinase-like 2 (IRAK2) from Pongo abelii (Sumatran orangutan).